A 137-amino-acid polypeptide reads, in one-letter code: Small ribosomal subunit protein uS9c (137 aa).

A disordered region spans residues 106–137 (KSEGYLTRDPRVKERKKYGLKKARKAPQFSKR). The segment covering 118–137 (KERKKYGLKKARKAPQFSKR) has biased composition (basic residues).

It belongs to the universal ribosomal protein uS9 family.

It is found in the plastid. The protein resides in the chloroplast. The chain is Small ribosomal subunit protein uS9c (rps9) from Pyropia yezoensis (Susabi-nori).